An 86-amino-acid polypeptide reads, in one-letter code: CLAVATA3/ESR (CLE)-related protein 7 (86 aa).

Positions 1 to 22 (MASKALLLFVMLTFLLVIEMEG) are cleaved as a signal peptide. Residue Asn46 is glycosylated (N-linked (GlcNAc...) asparagine). Residues 63 to 86 (VDRFSPGGPDPQHHSYPLSSKPRI) form a disordered region. Residues Pro68 and Pro71 each carry the hydroxyproline modification. Residue Pro71 is glycosylated (O-linked (Ara...) hydroxyproline).

It belongs to the CLV3/ESR signal peptide family. In terms of processing, the O-glycosylation (arabinosylation) of the hydroxyproline Pro-71 enhances binding affinity of the CLE7p peptide for its receptor. As to expression, expressed in roots and seedlings.

The protein resides in the secreted. Its subcellular location is the extracellular space. Functionally, extracellular signal peptide that regulates cell fate. This Arabidopsis thaliana (Mouse-ear cress) protein is CLAVATA3/ESR (CLE)-related protein 7.